Consider the following 475-residue polypeptide: Ornithine aminotransferase, mitochondrial (475 aa).

The transit peptide at 1 to 16 (MAATTRRLLYYVSKRF) directs the protein to the mitochondrion. The segment at 23–43 (RSYGGLPQSNSKSPPSSSQRL) is disordered. Low complexity predominate over residues 29-41 (PQSNSKSPPSSSQ). Pyridoxal 5'-phosphate-binding positions include 142–143 (GA) and F177. An L-ornithine-binding site is contributed by R180. 265–268 (DEVQ) contacts pyridoxal 5'-phosphate. Position 294 is an N6-(pyridoxal phosphate)lysine (K294). S323 provides a ligand contact to L-ornithine. Residue T324 participates in pyridoxal 5'-phosphate binding.

This sequence belongs to the class-III pyridoxal-phosphate-dependent aminotransferase family. As to quaternary structure, homotetramer. The cofactor is pyridoxal 5'-phosphate.

It is found in the mitochondrion matrix. It catalyses the reaction a 2-oxocarboxylate + L-ornithine = L-glutamate 5-semialdehyde + an L-alpha-amino acid. It participates in amino-acid biosynthesis; L-proline biosynthesis; L-glutamate 5-semialdehyde from L-ornithine: step 1/1. Functionally, mediates degradation of arginine for nitrogen recycling. Plays a role in non-host disease resistance by regulating pyrroline-5-carboxylate metabolism-induced hypersensitive response. This is Ornithine aminotransferase, mitochondrial from Arabidopsis thaliana (Mouse-ear cress).